Consider the following 102-residue polypeptide: Large ribosomal subunit protein bL21 (102 aa).

The protein belongs to the bacterial ribosomal protein bL21 family. Part of the 50S ribosomal subunit. Contacts protein L20.

Its function is as follows. This protein binds to 23S rRNA in the presence of protein L20. This is Large ribosomal subunit protein bL21 from Geobacillus sp. (strain WCH70).